Reading from the N-terminus, the 102-residue chain is Large ribosomal subunit protein bL21 (102 aa).

Belongs to the bacterial ribosomal protein bL21 family. As to quaternary structure, part of the 50S ribosomal subunit. Contacts protein L20.

Functionally, this protein binds to 23S rRNA in the presence of protein L20. This is Large ribosomal subunit protein bL21 from Oleidesulfovibrio alaskensis (strain ATCC BAA-1058 / DSM 17464 / G20) (Desulfovibrio alaskensis).